The primary structure comprises 124 residues: S-adenosylmethionine decarboxylase proenzyme (124 aa).

S63 acts as the Schiff-base intermediate with substrate; via pyruvic acid in catalysis. S63 is modified (pyruvic acid (Ser); by autocatalysis). H68 acts as the Proton acceptor; for processing activity in catalysis. Residue C83 is the Proton donor; for catalytic activity of the active site.

The protein belongs to the prokaryotic AdoMetDC family. Type 1 subfamily. In terms of assembly, heterotetramer of two alpha and two beta chains arranged as a dimer of alpha/beta heterodimers. Pyruvate is required as a cofactor. Is synthesized initially as an inactive proenzyme. Formation of the active enzyme involves a self-maturation process in which the active site pyruvoyl group is generated from an internal serine residue via an autocatalytic post-translational modification. Two non-identical subunits are generated from the proenzyme in this reaction, and the pyruvate is formed at the N-terminus of the alpha chain, which is derived from the carboxyl end of the proenzyme. The post-translation cleavage follows an unusual pathway, termed non-hydrolytic serinolysis, in which the side chain hydroxyl group of the serine supplies its oxygen atom to form the C-terminus of the beta chain, while the remainder of the serine residue undergoes an oxidative deamination to produce ammonia and the pyruvoyl group blocking the N-terminus of the alpha chain.

The enzyme catalyses S-adenosyl-L-methionine + H(+) = S-adenosyl 3-(methylsulfanyl)propylamine + CO2. Its pathway is amine and polyamine biosynthesis; S-adenosylmethioninamine biosynthesis; S-adenosylmethioninamine from S-adenosyl-L-methionine: step 1/1. In terms of biological role, catalyzes the decarboxylation of S-adenosylmethionine to S-adenosylmethioninamine (dcAdoMet), the propylamine donor required for the synthesis of the polyamines spermine and spermidine from the diamine putrescine. In Anoxybacillus flavithermus (strain DSM 21510 / WK1), this protein is S-adenosylmethionine decarboxylase proenzyme.